Reading from the N-terminus, the 936-residue chain is Protein translocase subunit SecA (936 aa).

Residues Gln90, 108–112, and Asp499 contribute to the ATP site; that span reads GEGKT.

It belongs to the SecA family. In terms of assembly, monomer and homodimer. Part of the essential Sec protein translocation apparatus which comprises SecA, SecYEG and auxiliary proteins SecDF. Other proteins may also be involved.

It is found in the cell inner membrane. It localises to the cellular thylakoid membrane. The protein localises to the cytoplasm. The enzyme catalyses ATP + H2O + cellular proteinSide 1 = ADP + phosphate + cellular proteinSide 2.. Part of the Sec protein translocase complex. Interacts with the SecYEG preprotein conducting channel. Has a central role in coupling the hydrolysis of ATP to the transfer of proteins into and across the cell membrane, serving as an ATP-driven molecular motor driving the stepwise translocation of polypeptide chains across the membrane. Its function is as follows. Probably participates in protein translocation into and across both the cytoplasmic and thylakoid membranes in cyanobacterial cells. The sequence is that of Protein translocase subunit SecA from Trichodesmium erythraeum (strain IMS101).